The primary structure comprises 31 residues: Nemertide alpha-4 (31 aa).

3 disulfide bridges follow: Cys2–Cys16, Cys9–Cys20, and Cys15–Cys26. 2 positions are modified to 4-hydroxyproline: Pro28 and Pro29.

Belongs to the nemertide family. As to expression, confined to the epidermis and to the mucus layer.

The protein localises to the secreted. In terms of biological role, potent toxin, demonstrating strong inhibitory effects on insect sodium channels (Nav) and reduced activity on mammalian sodium channels. Potently inhibits inactivation of insect sodium channels of B.germanica (BgNav1) (EC(50)=11.1 nM). Also delays the inactivation of most mammalian Nav (human Nav1.1/SCN1A; EC(50)=92 nM, rat Nav1.2/SCN2A; EC(50)=134.2 nM, rat Nav1.3/SCN3A; EC(50)=12.9 nM, rat Nav1.4/SCN4A; EC(50)=14.6 nM, human Nav1.5/SCN5A; EC(50)=27.8 nM, mouse Nav1.6/SCN8A; EC(50)=123.6 nM, human Nav1.9/SCN9A; EC(50)=80.5 nM). Inactivation is completely prevented by a concentration of 1 uM, resulting in sustained, non-inactivating currents. In addition, the toxin significantly enhances the recovery from inactivation, and the open state is not required for the toxin to interact with the channel. In vivo, injection into brine shrimp (Artemia salina) stops movement or causes death after 24 hours (EC(50)=0.4 uM). The protein is Nemertide alpha-4 of Lineus sanguineus (Ribbon worm).